We begin with the raw amino-acid sequence, 863 residues long: Glycerol-3-phosphate acyltransferase (863 aa).

The segment at 1-29 (MPKKNSPLLPKETTTTQSSVDTSGSSNLT) is disordered. The span at 12-29 (ETTTTQSSVDTSGSSNLT) shows a compositional bias: polar residues. Residues 343–348 (SHRSHI) carry the HXXXXD motif motif.

It belongs to the GPAT/DAPAT family.

The protein resides in the cell inner membrane. The catalysed reaction is sn-glycerol 3-phosphate + an acyl-CoA = a 1-acyl-sn-glycero-3-phosphate + CoA. It functions in the pathway phospholipid metabolism; CDP-diacylglycerol biosynthesis; CDP-diacylglycerol from sn-glycerol 3-phosphate: step 1/3. The chain is Glycerol-3-phosphate acyltransferase from Xylella fastidiosa (strain M12).